The chain runs to 386 residues: NADPH-dependent alkenal/one oxidoreductase, chloroplastic (386 aa).

Belongs to the zinc-containing alcohol dehydrogenase family. Quinone oxidoreductase subfamily.

The protein resides in the plastid. The protein localises to the chloroplast. Functionally, reduces the double bond in short-chain unsaturated carbonyls. Acts preferentially on alpha,beta-unsaturated ketones rather on alpha,beta-unsaturated aldehydes. Has no activity with (E)-2-hexenal and (E)-2-pentenal. Contributes to detoxify stromal reactive carbonyls produced under oxidative stress. In Arabidopsis thaliana (Mouse-ear cress), this protein is NADPH-dependent alkenal/one oxidoreductase, chloroplastic.